The sequence spans 353 residues: ATP-dependent kinase YFH7 (353 aa).

31 to 39 (GSPGSGKST) is a binding site for ATP.

It belongs to the YFH7 family.

In terms of biological role, ATP-dependent kinase that could be involved in endoplasmic reticulum membrane assembly. In Saccharomyces cerevisiae (strain Lalvin EC1118 / Prise de mousse) (Baker's yeast), this protein is ATP-dependent kinase YFH7 (YFH7).